Here is a 581-residue protein sequence, read N- to C-terminus: Lipoprotein LpqB (581 aa).

The signal sequence occupies residues 1–23; that stretch reads MRNHVSRYLTALIAVGCAATTAA. Cys24 carries the N-palmitoyl cysteine lipid modification. Cys24 carries the S-diacylglycerol cysteine lipid modification.

This sequence belongs to the LpqB lipoprotein family.

The protein localises to the cell membrane. The polypeptide is Lipoprotein LpqB (Corynebacterium diphtheriae (strain ATCC 700971 / NCTC 13129 / Biotype gravis)).